The sequence spans 447 residues: uncharacterized protein (447 aa).

The next 12 membrane-spanning stretches (helical) occupy residues 17 to 37 (IMMM…SSSA), 40 to 60 (VAGP…LFIM), 95 to 115 (IYWK…AIFI), 118 to 138 (WLPG…VTIV), 154 to 174 (AMIK…LLFV), 200 to 220 (GLIT…IIGV), 243 to 263 (IVAF…WNQV), 289 to 311 (AVIL…RILY), 333 to 353 (MFAI…SLFA), 361 to 381 (LMGS…FAHL), 393 to 415 (YYVK…ILIG), and 419 to 441 (TTSI…AYLV).

Belongs to the amino acid-polyamine-organocation (APC) superfamily.

The protein resides in the cell membrane. Functionally, may participate in leucine metabolism. May transport leucine or a compound related to leucine metabolism. This is an uncharacterized protein from Bacillus subtilis (strain 168).